A 952-amino-acid chain; its full sequence is UvrABC system protein A (952 aa).

Position 38-45 (38-45) interacts with ATP; the sequence is GLSGSGKS. A C4-type zinc finger spans residues 258–285; that stretch reads CNECGFSIPELEPRFFSFNSPVGACKSC. ABC transporter domains are found at residues 315-596 and 616-945; these read FRSV…KKSI and GNGK…LFLE. 648–655 contacts ATP; that stretch reads GVSGSGKS. Residues 747–773 form a C4-type zinc finger; the sequence is CENCSGDGLIKIEMHFLPDVFVKCESC.

The protein belongs to the ABC transporter superfamily. UvrA family. In terms of assembly, forms a heterotetramer with UvrB during the search for lesions.

It is found in the cytoplasm. In terms of biological role, the UvrABC repair system catalyzes the recognition and processing of DNA lesions. UvrA is an ATPase and a DNA-binding protein. A damage recognition complex composed of 2 UvrA and 2 UvrB subunits scans DNA for abnormalities. When the presence of a lesion has been verified by UvrB, the UvrA molecules dissociate. The polypeptide is UvrABC system protein A (Malacoplasma penetrans (strain HF-2) (Mycoplasma penetrans)).